Here is a 184-residue protein sequence, read N- to C-terminus: Ribosome maturation factor RimP (184 aa).

It belongs to the RimP family.

It localises to the cytoplasm. Required for maturation of 30S ribosomal subunits. In Corynebacterium diphtheriae (strain ATCC 700971 / NCTC 13129 / Biotype gravis), this protein is Ribosome maturation factor RimP.